The primary structure comprises 372 residues: Putative glutamate--cysteine ligase 2 (372 aa).

This sequence belongs to the glutamate--cysteine ligase type 2 family. YbdK subfamily.

It carries out the reaction L-cysteine + L-glutamate + ATP = gamma-L-glutamyl-L-cysteine + ADP + phosphate + H(+). Its function is as follows. ATP-dependent carboxylate-amine ligase which exhibits weak glutamate--cysteine ligase activity. The polypeptide is Putative glutamate--cysteine ligase 2 (Rhodopirellula baltica (strain DSM 10527 / NCIMB 13988 / SH1)).